Reading from the N-terminus, the 204-residue chain is Proteasome subunit beta type-3 (204 aa).

The protein belongs to the peptidase T1B family. The 26S proteasome consists of a 20S proteasome core and two 19S regulatory subunits. The 20S proteasome core is composed of 28 subunits that are arranged in four stacked rings, resulting in a barrel-shaped structure. The two end rings are each formed by seven alpha subunits, and the two central rings are each formed by seven beta subunits. The catalytic chamber with the active sites is on the inside of the barrel.

The protein resides in the cytoplasm. Its subcellular location is the nucleus. Non-catalytic component of the proteasome, a multicatalytic proteinase complex which is characterized by its ability to cleave peptides with Arg, Phe, Tyr, Leu, and Glu adjacent to the leaving group at neutral or slightly basic pH. The proteasome has an ATP-dependent proteolytic activity. The polypeptide is Proteasome subunit beta type-3 (pbs-3) (Caenorhabditis elegans).